Reading from the N-terminus, the 745-residue chain is Polyribonucleotide nucleotidyltransferase (745 aa).

Mg(2+) is bound by residues aspartate 487 and aspartate 493. Residues 554 to 613 form the KH domain; the sequence is PRIETMQIPTDKIRDVIGTGGKIIREIVEKTGAKINIEDTGIVKIASSDGKAIKAAYNWI. One can recognise an S1 motif domain in the interval 623–691; that stretch reads GTIYDGTIVK…ERGKIRLSMK (69 aa). The segment at 695-745 is disordered; it reads QETGEDLTEKLKAERAERGEPEREERSDRGDRGDRGPRRDRGERRRESSGE. The span at 701–745 shows a compositional bias: basic and acidic residues; the sequence is LTEKLKAERAERGEPEREERSDRGDRGDRGPRRDRGERRRESSGE.

Belongs to the polyribonucleotide nucleotidyltransferase family. Mg(2+) is required as a cofactor.

It localises to the cytoplasm. The enzyme catalyses RNA(n+1) + phosphate = RNA(n) + a ribonucleoside 5'-diphosphate. Functionally, involved in mRNA degradation. Catalyzes the phosphorolysis of single-stranded polyribonucleotides processively in the 3'- to 5'-direction. The sequence is that of Polyribonucleotide nucleotidyltransferase from Methylorubrum extorquens (strain CM4 / NCIMB 13688) (Methylobacterium extorquens).